The sequence spans 203 residues: Nudix hydrolase 12, mitochondrial (203 aa).

Residues 18–166 (NFRLVSGCIP…WMQRALEEFL (149 aa)) enclose the Nudix hydrolase domain. Residues 66-87 (GGWEDDETVLEAASREAIEEAG) carry the Nudix box motif. Residues glutamate 81 and glutamate 85 each contribute to the Mg(2+) site.

The protein belongs to the Nudix hydrolase family. The cofactor is Mg(2+). Mn(2+) is required as a cofactor. As to expression, expressed in roots, leaves, stems and inflorescences.

The protein resides in the mitochondrion. Functionally, probably mediates the hydrolysis of some nucleoside diphosphate derivatives. The protein is Nudix hydrolase 12, mitochondrial (NUDT12) of Arabidopsis thaliana (Mouse-ear cress).